The sequence spans 348 residues: Dihydroorotase (348 aa).

2 residues coordinate Zn(2+): H17 and H19. Substrate contacts are provided by residues 19-21 (HLR) and N45. 3 residues coordinate Zn(2+): K103, H140, and H178. N6-carboxylysine is present on K103. Residue H140 participates in substrate binding. Residue L223 coordinates substrate. D251 contributes to the Zn(2+) binding site. The active site involves D251. Substrate-binding residues include H255 and A267.

The protein belongs to the metallo-dependent hydrolases superfamily. DHOase family. Class II DHOase subfamily. In terms of assembly, homodimer. It depends on Zn(2+) as a cofactor.

It carries out the reaction (S)-dihydroorotate + H2O = N-carbamoyl-L-aspartate + H(+). The protein operates within pyrimidine metabolism; UMP biosynthesis via de novo pathway; (S)-dihydroorotate from bicarbonate: step 3/3. In terms of biological role, catalyzes the reversible cyclization of carbamoyl aspartate to dihydroorotate. The chain is Dihydroorotase from Shigella flexneri serotype 5b (strain 8401).